Here is a 146-residue protein sequence, read N- to C-terminus: Small ribosomal subunit protein eS19 (146 aa).

Belongs to the eukaryotic ribosomal protein eS19 family.

The chain is Small ribosomal subunit protein eS19 (RPS19A) from Oryza sativa subsp. japonica (Rice).